The chain runs to 364 residues: UDP-N-acetylglucosamine--N-acetylmuramyl-(pentapeptide) pyrophosphoryl-undecaprenol N-acetylglucosamine transferase (364 aa).

Residues 10 to 12 (TGG), asparagine 124, serine 195, isoleucine 250, and glutamine 295 each bind UDP-N-acetyl-alpha-D-glucosamine.

This sequence belongs to the glycosyltransferase 28 family. MurG subfamily.

It localises to the cell membrane. It catalyses the reaction di-trans,octa-cis-undecaprenyl diphospho-N-acetyl-alpha-D-muramoyl-L-alanyl-D-glutamyl-meso-2,6-diaminopimeloyl-D-alanyl-D-alanine + UDP-N-acetyl-alpha-D-glucosamine = di-trans,octa-cis-undecaprenyl diphospho-[N-acetyl-alpha-D-glucosaminyl-(1-&gt;4)]-N-acetyl-alpha-D-muramoyl-L-alanyl-D-glutamyl-meso-2,6-diaminopimeloyl-D-alanyl-D-alanine + UDP + H(+). Its pathway is cell wall biogenesis; peptidoglycan biosynthesis. Its function is as follows. Cell wall formation. Catalyzes the transfer of a GlcNAc subunit on undecaprenyl-pyrophosphoryl-MurNAc-pentapeptide (lipid intermediate I) to form undecaprenyl-pyrophosphoryl-MurNAc-(pentapeptide)GlcNAc (lipid intermediate II). In Bacillus cytotoxicus (strain DSM 22905 / CIP 110041 / 391-98 / NVH 391-98), this protein is UDP-N-acetylglucosamine--N-acetylmuramyl-(pentapeptide) pyrophosphoryl-undecaprenol N-acetylglucosamine transferase.